Reading from the N-terminus, the 1475-residue chain is Sterol 3-beta-glucosyltransferase (1475 aa).

2 disordered regions span residues 1-73 (MPPP…PPMF) and 94-218 (HDRF…EDDK). A compositionally biased stretch (low complexity) spans 8 to 17 (LPLHGPAGAA). The span at 30–40 (RVGKKLQKKRH) shows a compositional bias: basic residues. Residues 108–118 (GPQRDSADRSH) are compositionally biased toward basic and acidic residues. Basic residues predominate over residues 156 to 168 (EKHKRKISGHKLL). Positions 270–315 (QDIFEFDQPEAVIEEYPCWLLQSVLLQGYMYITAKHICFYSYLPKK) constitute a GRAM 1 domain. The 96-residue stretch at 318-413 (EVVKSGYLSK…WVKSLQRVIF (96 aa)) folds into the PH domain. Disordered stretches follow at residues 492–541 (ARLK…TTNK), 594–636 (SSPR…MEEP), and 653–715 (QILR…PVTP). A compositionally biased stretch (low complexity) spans 505-531 (QQQQQQHPMQPPMQASARSSMSGSRRA). Composition is skewed to polar residues over residues 621 to 634 (QQGS…SSME) and 653 to 674 (QILR…SASR). Residues 675-686 (TEVEKQQRRDPR) show a composition bias toward basic and acidic residues. Residues 798 to 901 (RFRAHFALPE…RDDCAVTLLQ (104 aa)) form the GRAM 2 domain. UDP-alpha-D-glucose-binding residues include Ser989, Arg990, Asp992, Ala1293, His1295, His1308, Ser1311, Gly1312, Thr1313, Asp1332, and Gln1333. The segment at 1413-1475 (IQVEPDEDEE…RVSPSQQSVA (63 aa)) is disordered. Residues 1416 to 1425 (EPDEDEESAE) are compositionally biased toward acidic residues.

The protein belongs to the glycosyltransferase 28 family.

The protein resides in the cytoplasm. It localises to the preautophagosomal structure membrane. The enzyme catalyses a sterol + UDP-alpha-D-glucose = a sterol 3-beta-D-glucoside + UDP + H(+). The catalysed reaction is ergosterol + UDP-alpha-D-glucose = ergosteryl 3-beta-D-glucoside + UDP + H(+). Its function is as follows. Sterol glycosyltransferase responsible for the glycosylation of ergosterol to form ergosterol-glucoside. Mediates autophagic degradation of peroxisomes (pexophagy) and is involved in pathogenesis via peroxisome degradation inside appressoria that are developing into the host invasion stage. In Glomerella lagenarium (Anthracnose fungus), this protein is Sterol 3-beta-glucosyltransferase.